The primary structure comprises 388 residues: Queuine tRNA-ribosyltransferase (388 aa).

Residue D91 is the Proton acceptor of the active site. Residues 91-95 (DSGGY), D145, Q190, and G217 contribute to the substrate site. Residues 248–254 (GVGAPED) form an RNA binding region. D267 functions as the Nucleophile in the catalytic mechanism. Residues 272 to 276 (TRLAR) form an RNA binding; important for wobble base 34 recognition region. Positions 305, 307, 310, and 336 each coordinate Zn(2+).

The protein belongs to the queuine tRNA-ribosyltransferase family. In terms of assembly, homodimer. Within each dimer, one monomer is responsible for RNA recognition and catalysis, while the other monomer binds to the replacement base PreQ1. The cofactor is Zn(2+).

It carries out the reaction 7-aminomethyl-7-carbaguanine + guanosine(34) in tRNA = 7-aminomethyl-7-carbaguanosine(34) in tRNA + guanine. It participates in tRNA modification; tRNA-queuosine biosynthesis. Its function is as follows. Catalyzes the base-exchange of a guanine (G) residue with the queuine precursor 7-aminomethyl-7-deazaguanine (PreQ1) at position 34 (anticodon wobble position) in tRNAs with GU(N) anticodons (tRNA-Asp, -Asn, -His and -Tyr). Catalysis occurs through a double-displacement mechanism. The nucleophile active site attacks the C1' of nucleotide 34 to detach the guanine base from the RNA, forming a covalent enzyme-RNA intermediate. The proton acceptor active site deprotonates the incoming PreQ1, allowing a nucleophilic attack on the C1' of the ribose to form the product. After dissociation, two additional enzymatic reactions on the tRNA convert PreQ1 to queuine (Q), resulting in the hypermodified nucleoside queuosine (7-(((4,5-cis-dihydroxy-2-cyclopenten-1-yl)amino)methyl)-7-deazaguanosine). The sequence is that of Queuine tRNA-ribosyltransferase from Dictyoglomus turgidum (strain DSM 6724 / Z-1310).